The chain runs to 353 residues: Phospho-N-acetylmuramoyl-pentapeptide-transferase (353 aa).

The next 10 helical transmembrane spans lie at phenylalanine 22–alanine 42, threonine 65–isoleucine 85, aspartate 88–isoleucine 108, leucine 129–leucine 149, proline 161–serine 181, glycine 192–serine 212, glycine 228–tryptophan 248, valine 256–isoleucine 276, isoleucine 281–valine 301, and lysine 330–isoleucine 350.

Belongs to the glycosyltransferase 4 family. MraY subfamily. Mg(2+) is required as a cofactor.

The protein resides in the cell inner membrane. It carries out the reaction UDP-N-acetyl-alpha-D-muramoyl-L-alanyl-gamma-D-glutamyl-meso-2,6-diaminopimeloyl-D-alanyl-D-alanine + di-trans,octa-cis-undecaprenyl phosphate = di-trans,octa-cis-undecaprenyl diphospho-N-acetyl-alpha-D-muramoyl-L-alanyl-D-glutamyl-meso-2,6-diaminopimeloyl-D-alanyl-D-alanine + UMP. The protein operates within cell wall biogenesis; peptidoglycan biosynthesis. In terms of biological role, catalyzes the initial step of the lipid cycle reactions in the biosynthesis of the cell wall peptidoglycan: transfers peptidoglycan precursor phospho-MurNAc-pentapeptide from UDP-MurNAc-pentapeptide onto the lipid carrier undecaprenyl phosphate, yielding undecaprenyl-pyrophosphoryl-MurNAc-pentapeptide, known as lipid I. The protein is Phospho-N-acetylmuramoyl-pentapeptide-transferase of Campylobacter jejuni subsp. jejuni serotype O:23/36 (strain 81-176).